Reading from the N-terminus, the 156-residue chain is Ribosomal RNA large subunit methyltransferase H (156 aa).

Residues L74, G105, and 124-129 (LSKLTL) contribute to the S-adenosyl-L-methionine site.

Belongs to the RNA methyltransferase RlmH family. In terms of assembly, homodimer.

Its subcellular location is the cytoplasm. It catalyses the reaction pseudouridine(1915) in 23S rRNA + S-adenosyl-L-methionine = N(3)-methylpseudouridine(1915) in 23S rRNA + S-adenosyl-L-homocysteine + H(+). Its function is as follows. Specifically methylates the pseudouridine at position 1915 (m3Psi1915) in 23S rRNA. The protein is Ribosomal RNA large subunit methyltransferase H of Legionella pneumophila (strain Lens).